The chain runs to 148 residues: Large ribosomal subunit protein bL9 (148 aa).

This sequence belongs to the bacterial ribosomal protein bL9 family.

Functionally, binds to the 23S rRNA. The sequence is that of Large ribosomal subunit protein bL9 from Leptospira biflexa serovar Patoc (strain Patoc 1 / Ames).